The chain runs to 474 residues: Aspartyl/glutamyl-tRNA(Asn/Gln) amidotransferase subunit B (474 aa).

Belongs to the GatB/GatE family. GatB subfamily. Heterotrimer of A, B and C subunits.

It catalyses the reaction L-glutamyl-tRNA(Gln) + L-glutamine + ATP + H2O = L-glutaminyl-tRNA(Gln) + L-glutamate + ADP + phosphate + H(+). The enzyme catalyses L-aspartyl-tRNA(Asn) + L-glutamine + ATP + H2O = L-asparaginyl-tRNA(Asn) + L-glutamate + ADP + phosphate + 2 H(+). Functionally, allows the formation of correctly charged Asn-tRNA(Asn) or Gln-tRNA(Gln) through the transamidation of misacylated Asp-tRNA(Asn) or Glu-tRNA(Gln) in organisms which lack either or both of asparaginyl-tRNA or glutaminyl-tRNA synthetases. The reaction takes place in the presence of glutamine and ATP through an activated phospho-Asp-tRNA(Asn) or phospho-Glu-tRNA(Gln). The protein is Aspartyl/glutamyl-tRNA(Asn/Gln) amidotransferase subunit B of Desulfotalea psychrophila (strain LSv54 / DSM 12343).